The sequence spans 98 residues: Acylphosphatase (98 aa).

The region spanning arginine 12–arginine 98 is the Acylphosphatase-like domain. Active-site residues include arginine 27 and asparagine 45.

This sequence belongs to the acylphosphatase family.

It carries out the reaction an acyl phosphate + H2O = a carboxylate + phosphate + H(+). This chain is Acylphosphatase (acyP), found in Mycolicibacterium smegmatis (strain ATCC 700084 / mc(2)155) (Mycobacterium smegmatis).